The primary structure comprises 274 residues: 4-diphosphocytidyl-2-C-methyl-D-erythritol kinase (274 aa).

Lysine 9 is a catalytic residue. 91-101 is a binding site for ATP; it reads PAGAGLGGGSS. Aspartate 133 is an active-site residue.

The protein belongs to the GHMP kinase family. IspE subfamily.

It carries out the reaction 4-CDP-2-C-methyl-D-erythritol + ATP = 4-CDP-2-C-methyl-D-erythritol 2-phosphate + ADP + H(+). The protein operates within isoprenoid biosynthesis; isopentenyl diphosphate biosynthesis via DXP pathway; isopentenyl diphosphate from 1-deoxy-D-xylulose 5-phosphate: step 3/6. Its function is as follows. Catalyzes the phosphorylation of the position 2 hydroxy group of 4-diphosphocytidyl-2C-methyl-D-erythritol. The protein is 4-diphosphocytidyl-2-C-methyl-D-erythritol kinase of Persephonella marina (strain DSM 14350 / EX-H1).